Consider the following 85-residue polypeptide: Putative membrane protein insertion efficiency factor (85 aa).

It belongs to the UPF0161 family.

It is found in the cell membrane. In terms of biological role, could be involved in insertion of integral membrane proteins into the membrane. The chain is Putative membrane protein insertion efficiency factor from Baumannia cicadellinicola subsp. Homalodisca coagulata.